Consider the following 143-residue polypeptide: Large ribosomal subunit protein uL11 (143 aa).

The protein belongs to the universal ribosomal protein uL11 family. Part of the ribosomal stalk of the 50S ribosomal subunit. Interacts with L10 and the large rRNA to form the base of the stalk. L10 forms an elongated spine to which L12 dimers bind in a sequential fashion forming a multimeric L10(L12)X complex. In terms of processing, one or more lysine residues are methylated.

Forms part of the ribosomal stalk which helps the ribosome interact with GTP-bound translation factors. This Cutibacterium acnes (strain DSM 16379 / KPA171202) (Propionibacterium acnes) protein is Large ribosomal subunit protein uL11.